Reading from the N-terminus, the 494-residue chain is UPF0371 protein SPCG_0344 (494 aa).

This sequence belongs to the UPF0371 family.

The protein is UPF0371 protein SPCG_0344 of Streptococcus pneumoniae (strain CGSP14).